The sequence spans 56 residues: PI-stichotoxin-Hmg3c (56 aa).

The 51-residue stretch at 4-54 folds into the BPTI/Kunitz inhibitor domain; the sequence is CLEPKVVGPCTAYFPRFYFDSETGKCTPFIYGGCEGNGNNFETLHACRAIC. Disulfide bonds link C4/C54, C13/C37, and C29/C50.

Belongs to the venom Kunitz-type family. Sea anemone type 2 potassium channel toxin subfamily. Post-translationally, contains three disulfide bonds.

Its subcellular location is the secreted. The protein localises to the nematocyst. In terms of biological role, serine protease inhibitor that inhibits trypsin (Ki=73.8 nM) and chymotrypsin (Ki=993 nM). This is PI-stichotoxin-Hmg3c from Heteractis magnifica (Magnificent sea anemone).